We begin with the raw amino-acid sequence, 859 residues long: Protein SEY1 (859 aa).

Topologically, residues 1–742 (MMMNSHFAGV…KRSAIGGITQ (742 aa)) are cytoplasmic. One can recognise a GB1/RHD3-type G domain in the interval 49–291 (GFNYHLISVF…FQPQYHRRIP (243 aa)). Position 59–66 (59–66 (GSQSTGKS)) interacts with GTP. Residues 476 to 496 (FEHELKVYRKDLDDVSGRLRK) are a coiled coil. The interval 525–544 (LGTGRGGSGAPEHGERPPSE) is disordered. The chain crosses the membrane as a helical span at residues 743–763 (VPLYFYGLLVALGWNEIVAVL). Over 764–766 (RNP) the chain is Lumenal. Residues 767–787 (VYFIFLILCAVGAYVTYTLNL) form a helical membrane-spanning segment. The Cytoplasmic segment spans residues 788–859 (WGPMIRMGNA…DAEVEDLDDI (72 aa)). The segment at 816–859 (SSESGRQAMAMSGNQPRGESVRMNRLNGNGKKDEDAEVEDLDDI) is disordered. The span at 850–859 (DAEVEDLDDI) shows a compositional bias: acidic residues.

The protein belongs to the TRAFAC class dynamin-like GTPase superfamily. GB1/RHD3 GTPase family. RHD3 subfamily.

Its subcellular location is the endoplasmic reticulum membrane. Functionally, cooperates with the reticulon proteins and tubule-shaping DP1 family proteins to generate and maintain the structure of the tubular endoplasmic reticulum network. Has GTPase activity, which is required for its function in ER organization. This chain is Protein SEY1, found in Phaeosphaeria nodorum (strain SN15 / ATCC MYA-4574 / FGSC 10173) (Glume blotch fungus).